The following is a 263-amino-acid chain: Linear gramicidin dehydrogenase LgrE (263 aa).

The active site involves Ser-96.

This sequence belongs to the thioesterase family.

Its function is as follows. In the final step of gramicidin biosynthesis, reduces the pentadecapeptide-aldehyde intermediate, that is released from the terminal module of the non-ribosomal peptide synthetase LgrD, to the final product ethanolamine-containing gramicidin. In Brevibacillus parabrevis, this protein is Linear gramicidin dehydrogenase LgrE (lgrE).